Consider the following 372-residue polypeptide: MRSSSWRKSDQRVFIEQVRECMNNGYLLSSKKIGSGAFSKVYLAYATRERMKHNPRLSSDLRGKRHTMVAIKIVSMAEAPAEYSRKFLPREILSLNATYKHMNIVQLYETYQNSQRSYLVLELAARGDLLEHINAVSDLRCCPGLEEEEARRLFWQLVSAVAHCHNVGIVHRDLKCENILLDDQGFIKLTDFGFANWVGLKNSLLSTFCGSVAYTAPEILMSKKYNGEQADLWSLGIILHAMVSGKLPFKEHQPHRMLNLIRRGPIFRPGLSPECRDLIRGLLQLHPCERLDLQQVAAHCWMLPAEHMLSSALGAPREQDHSWSTVAPDNTEPDRDTRHARSKGSSSSSGRTSPRRPSLAQLCNTWKPAPEQ.

A Protein kinase domain is found at 27 to 302 (LLSSKKIGSG…LQQVAAHCWM (276 aa)). Residues 33 to 41 (IGSGAFSKV) and Lys72 contribute to the ATP site. Asp173 acts as the Proton acceptor in catalysis. A disordered region spans residues 314-372 (GAPREQDHSWSTVAPDNTEPDRDTRHARSKGSSSSSGRTSPRRPSLAQLCNTWKPAPEQ). The segment covering 343 to 358 (KGSSSSSGRTSPRRPS) has biased composition (low complexity).

Belongs to the protein kinase superfamily. CAMK Ser/Thr protein kinase family. The cofactor is Mg(2+). Post-translationally, autophosphorylated.

The catalysed reaction is L-seryl-[protein] + ATP = O-phospho-L-seryl-[protein] + ADP + H(+). It carries out the reaction L-threonyl-[protein] + ATP = O-phospho-L-threonyl-[protein] + ADP + H(+). Activated by phosphorylation on Thr-207, potentially by autophosphorylation. In terms of biological role, may be involved in a signaling pathway during male germ cell development or mature sperm function. The polypeptide is Testis-specific serine/threonine-protein kinase 5 (Mus musculus (Mouse)).